Reading from the N-terminus, the 1721-residue chain is Ras guanine nucleotide exchange factor R (1721 aa).

Residues 148-279 (QLEDEVDLVH…LQQQQQQQRS (132 aa)) are a coiled coil. Disordered stretches follow at residues 213-232 (QQQK…KEEK), 445-515 (SSLG…NQQP), 551-701 (ATTT…VDKQ), 716-766 (RTPL…KSPS), 797-837 (TITI…TPNK), and 929-981 (DEVS…DPVS). The span at 216–232 (KHQEEKEKNDQKEKEEK) shows a compositional bias: basic and acidic residues. Composition is skewed to low complexity over residues 454 to 469 (SPEK…STSE), 479 to 493 (HNNN…STNN), 501 to 515 (PSLS…NQQP), and 551 to 581 (ATTT…LSIS). The segment covering 618–627 (NGTTSPRNNE) has biased composition (polar residues). 2 stretches are compositionally biased toward low complexity: residues 628–651 (SSVT…VNTI) and 663–686 (TPTT…SQND). Residues 687-701 (KQNENNNKENFVDKQ) are compositionally biased toward basic and acidic residues. 3 stretches are compositionally biased toward low complexity: residues 724-748 (SSNS…TNSS), 797-836 (TITI…TTPN), and 933-952 (ESSS…NTPS). Residues 802–831 (NNNNNNNNNNNNNNNNNNNIQQQQQQQQQI) are a coiled coil. Residues 968–978 (NLSSINNSSYD) show a composition bias toward polar residues. Positions 1291-1411 (GRYVPKAGTL…ILGGLIKKKE (121 aa)) constitute an N-terminal Ras-GEF domain. The 230-residue stretch at 1447–1676 (NESEIARQLT…YQLSLIREPR (230 aa)) folds into the Ras-GEF domain.

In terms of processing, phosphorylated on threonine residues.

Promotes the exchange of Ras-bound GDP by GTP. May also play a role in the activation of rasG. The polypeptide is Ras guanine nucleotide exchange factor R (gefR) (Dictyostelium discoideum (Social amoeba)).